The following is a 421-amino-acid chain: Testin (421 aa).

Positions 92–199 constitute a PET domain; it reads MILTNPVAAK…GDVKLPCEMD (108 aa). Residues 133 to 164 are disordered; that stretch reads EKQPVAGSEGAQYRKKQLAKQLPAHDQDPSKC. A compositionally biased stretch (basic and acidic residues) spans 155-164; it reads PAHDQDPSKC. 3 LIM zinc-binding domains span residues 234–297, 299–359, and 362–421; these read YSCY…CDSE, PRCA…NHAV, and QGCH…KRMS.

This sequence belongs to the prickle / espinas / testin family. Interacts via LIM domain 1 with ZYX. Interacts (via LIM domain 3) with ENAH and VASP. Interacts with ALKBH4, talin, actin, alpha-actinin, GRIP1 and PXN. Interacts (via LIM domain 2) with ACTL7A (via N-terminus). Heterodimer with ACTL7A; the heterodimer interacts with ENAH to form a heterotrimer.

The protein resides in the cytoplasm. It localises to the cell junction. It is found in the focal adhesion. Functionally, scaffold protein that may play a role in cell adhesion, cell spreading and in the reorganization of the actin cytoskeleton. Plays a role in the regulation of cell proliferation. May act as a tumor suppressor. This is Testin (TES) from Pan troglodytes (Chimpanzee).